The primary structure comprises 112 residues: MCGDCVEKEYPNRGNTCLENGSFLLNFTGCAVCSKRDFMLITNKSLKEEDGEEIVTYDHLCKNCHHVIARHEYTFSIMDEFQEYTMLCLLCGKAEDTISILPDDPRQMTLLF.

Residues Cys-2, Cys-5, Cys-30, Cys-33, His-59, Cys-61, Cys-64, His-66, His-71, Cys-88, and Cys-91 each contribute to the Zn(2+) site.

This sequence belongs to the Churchill family.

Its function is as follows. Transcriptional activator that mediates FGF signaling during neural development. Plays a role in the regulation of cell movement. In terms of biological role, does not bind DNA by itself. The chain is Protein Churchill (CHURC1) from Homo sapiens (Human).